A 227-amino-acid polypeptide reads, in one-letter code: MELKKIAVGLTALLGMSVANAHNVWLEPASSQDEYVVKFGHEQTETYPESKLKSIQALNSQGKLTAVDYQFRNGEAYLMPKSDLVFVHFDNGVWSKLPSGKYVEKTKREEPTAEFSTNPVKFGKAILKWDAESFKSHQQAYELIPQEKAQANKPLSILVLHNGKPVQGIKVGVSEDAPFNLTNEKGIAQFTPTKGFNKVWAEFEEKVTNNADYDRRTVEYMLTFDAQ.

Positions 1-21 (MELKKIAVGLTALLGMSVANA) are cleaved as a signal peptide.

This is an uncharacterized protein from Haemophilus influenzae (strain ATCC 51907 / DSM 11121 / KW20 / Rd).